The chain runs to 506 residues: UBX domain-containing protein 4 (506 aa).

The segment at 1–199 (MLWFQGAIPA…PAEDLTVRVE (199 aa)) is interaction with UBQLN1. Over 1-411 (MLWFQGAIPA…VPSSSGDIWT (411 aa)) the chain is Cytoplasmic. Composition is skewed to polar residues over residues 114-136 (SLKGETSVTNDKQSESSVSTPSA) and 177-189 (SLSQEPPGCSNQR). The segment at 114–193 (SLKGETSVTN…GCSNQRPAED (80 aa)) is disordered. In terms of domain architecture, UBX spans 313 to 391 (DRSTIARIQF…ELAPSASVVL (79 aa)). An intramembrane segment occupies 412–432 (LLGTVLYPFLAIWRLISNFLF). Topologically, residues 433–506 (SNPPPAQTSA…TWNGNSTQQM (74 aa)) are cytoplasmic. A disordered region spans residues 437 to 506 (PAQTSARATS…TWNGNSTQQM (70 aa)). Residues 444 to 456 (ATSTEPSNSASSS) show a composition bias toward low complexity. The span at 457-489 (KSEKREPVRKRVLEKRGEDFKKEGKIYRLRTQD) shows a compositional bias: basic and acidic residues. T487 is modified (phosphothreonine). Polar residues predominate over residues 496–506 (NTWNGNSTQQM).

Directly interacts with VCP. Interacts with UBQLN1. Forms a complex with VCP and UBQLN1.

It localises to the endoplasmic reticulum membrane. Its subcellular location is the nucleus envelope. In terms of biological role, involved in endoplasmic reticulum-associated protein degradation (ERAD). Acts as a platform to recruit both UBQLN1 and VCP to the ER during ERAD. The sequence is that of UBX domain-containing protein 4 (Ubxn4) from Rattus norvegicus (Rat).